Consider the following 308-residue polypeptide: uncharacterized protein (308 aa).

This is an uncharacterized protein from Mycoplasmoides gallisepticum (strain R(low / passage 15 / clone 2)) (Mycoplasma gallisepticum).